Consider the following 351-residue polypeptide: Protein pelota homolog (351 aa).

It belongs to the eukaryotic release factor 1 family. Pelota subfamily. Monomer. A divalent metal cation is required as a cofactor.

The protein localises to the cytoplasm. Functionally, may function in recognizing stalled ribosomes, interact with stem-loop structures in stalled mRNA molecules, and effect endonucleolytic cleavage of the mRNA. May play a role in the release non-functional ribosomes and degradation of damaged mRNAs. Has endoribonuclease activity. The sequence is that of Protein pelota homolog from Methanosphaera stadtmanae (strain ATCC 43021 / DSM 3091 / JCM 11832 / MCB-3).